We begin with the raw amino-acid sequence, 147 residues long: Putative pre-16S rRNA nuclease (147 aa).

It belongs to the YqgF nuclease family.

It is found in the cytoplasm. In terms of biological role, could be a nuclease involved in processing of the 5'-end of pre-16S rRNA. The chain is Putative pre-16S rRNA nuclease from Acinetobacter baylyi (strain ATCC 33305 / BD413 / ADP1).